The chain runs to 203 residues: N-(5'-phosphoribosyl)anthranilate isomerase (203 aa).

Belongs to the TrpF family.

The enzyme catalyses N-(5-phospho-beta-D-ribosyl)anthranilate = 1-(2-carboxyphenylamino)-1-deoxy-D-ribulose 5-phosphate. It participates in amino-acid biosynthesis; L-tryptophan biosynthesis; L-tryptophan from chorismate: step 3/5. In Geotalea uraniireducens (strain Rf4) (Geobacter uraniireducens), this protein is N-(5'-phosphoribosyl)anthranilate isomerase.